The primary structure comprises 452 residues: Tubulin alpha-6 chain (452 aa).

Residues Gln-11, Glu-69, Ser-138, Gly-142, Thr-143, Thr-177, Asn-204, and Asn-226 each coordinate GTP. Mg(2+) is bound at residue Glu-69. Residue Glu-252 is part of the active site.

It belongs to the tubulin family. As to quaternary structure, dimer of alpha and beta chains. A typical microtubule is a hollow water-filled tube with an outer diameter of 25 nm and an inner diameter of 15 nM. Alpha-beta heterodimers associate head-to-tail to form protofilaments running lengthwise along the microtubule wall with the beta-tubulin subunit facing the microtubule plus end conferring a structural polarity. Microtubules usually have 13 protofilaments but different protofilament numbers can be found in some organisms and specialized cells. The cofactor is Mg(2+).

The protein localises to the cytoplasm. The protein resides in the cytoskeleton. It localises to the spindle. It carries out the reaction GTP + H2O = GDP + phosphate + H(+). Functionally, tubulin is the major constituent of microtubules, a cylinder consisting of laterally associated linear protofilaments composed of alpha- and beta-tubulin heterodimers. Microtubules grow by the addition of GTP-tubulin dimers to the microtubule end, where a stabilizing cap forms. Below the cap, tubulin dimers are in GDP-bound state, owing to GTPase activity of alpha-tubulin. In Naegleria pringsheimi (Amoeba), this protein is Tubulin alpha-6 chain (TUBA6).